A 460-amino-acid polypeptide reads, in one-letter code: 25S rRNA (cytosine-C(5))-methyltransferase rcm1 (460 aa).

S-adenosyl-L-methionine-binding positions include 223–229 (CAAPGNK), E246, D273, and D293. The active-site Nucleophile is C350. A compositionally biased stretch (basic and acidic residues) spans 430 to 439 (KMYKNDDDTK). Residues 430–460 (KMYKNDDDTKKRKRKKKKKEVKKKARIQGEE) are disordered. The segment covering 440 to 460 (KRKRKKKKKEVKKKARIQGEE) has biased composition (basic residues).

It belongs to the class I-like SAM-binding methyltransferase superfamily. RsmB/NOP family. In terms of assembly, interacts with trm112.

The protein localises to the nucleus. Its subcellular location is the nucleolus. It catalyses the reaction a cytidine in 25S rRNA + S-adenosyl-L-methionine = a 5-methylcytidine in 25S rRNA + S-adenosyl-L-homocysteine + H(+). Its function is as follows. S-adenosyl-L-methionine-dependent methyltransferase that specifically methylates the C(5) position of a cytosine in 25S rRNA. This is 25S rRNA (cytosine-C(5))-methyltransferase rcm1 (rcm1) from Schizosaccharomyces pombe (strain 972 / ATCC 24843) (Fission yeast).